The sequence spans 206 residues: Transmembrane emp24 domain-containing protein bai (206 aa).

A signal peptide spans 1–20; the sequence is MARTLLILCTLMAWAWTGEA. Residues 21–172 lie on the Lumenal side of the membrane; sequence VMFKLTPNTQ…RDTNEKTNSR (152 aa). Residues 30-140 enclose the GOLD domain; that stretch reads QKCLKEDIQA…LKPLEVDLKR (111 aa). Residues 173-193 traverse the membrane as a helical segment; it reads VLFFSIFSMCCLLGLATWQVL. Topologically, residues 194–206 are cytoplasmic; that stretch reads YLRRYFKAKKLIE.

Belongs to the EMP24/GP25L family.

Its subcellular location is the membrane. Functionally, eca and bai are essential, though not redundant, for dorsoventral patterning of the embryo. Specifically required during early embryogenesis for the activity of maternal tkv, while the zygotic tkv is not affected. In Drosophila ananassae (Fruit fly), this protein is Transmembrane emp24 domain-containing protein bai.